The sequence spans 135 residues: Flagellar assembly factor FliW 1 (135 aa).

Belongs to the FliW family. Interacts with translational regulator CsrA and flagellin(s).

The protein localises to the cytoplasm. In terms of biological role, acts as an anti-CsrA protein, binds CsrA and prevents it from repressing translation of its target genes, one of which is flagellin. Binds to flagellin and participates in the assembly of the flagellum. The chain is Flagellar assembly factor FliW 1 from Helicobacter pylori (strain ATCC 700392 / 26695) (Campylobacter pylori).